A 205-amino-acid chain; its full sequence is MWNALKRLPLFPPSPKEDKQLRKERLHWRNMCPSLTETVTALFIHEKPTKGFRALGTGRFMSAFVAVFFNMGLSQKTRPVQLFGYILPLFLKPFVCTVVTTDVYDKDGRFVESKFEEIFNKHARTHKDALTAKEIKQMLKTNREPYDFIGWLSDFIEWKILHTLAQDNGLLTEDAVRGVYDGSLFQQLEKKRSSSSSRGKKQKLP.

Positions 79–88 (PVQLFGYILP) match the Proline-knot motif. Serine 183 is modified (phosphoserine).

The protein belongs to the caleosin family.

The protein localises to the lipid droplet. This is Probable inactive peroxygenase-like protein from Arabidopsis thaliana (Mouse-ear cress).